Consider the following 67-residue polypeptide: DNA-directed RNA polymerase subunit omega (67 aa).

Belongs to the RNA polymerase subunit omega family. As to quaternary structure, the RNAP catalytic core consists of 2 alpha, 1 beta, 1 beta' and 1 omega subunit. When a sigma factor is associated with the core the holoenzyme is formed, which can initiate transcription.

The enzyme catalyses RNA(n) + a ribonucleoside 5'-triphosphate = RNA(n+1) + diphosphate. In terms of biological role, promotes RNA polymerase assembly. Latches the N- and C-terminal regions of the beta' subunit thereby facilitating its interaction with the beta and alpha subunits. The polypeptide is DNA-directed RNA polymerase subunit omega (Leptothrix cholodnii (strain ATCC 51168 / LMG 8142 / SP-6) (Leptothrix discophora (strain SP-6))).